Here is a 406-residue protein sequence, read N- to C-terminus: MAAARGAWCVPCLASIETLQELCRKEMLICTNIGITRKNLNNYEVEYLCDYRIEKGVEKFFVKWKGWPESCNTWEPTRNLKCPTLLKQFYSDLYNYFCALKPNKKGFLKNSIKSLDPSLSDYIVKKAKQRIALRRWEEELNRKKTHSGTLFVENTVDLEGPPMDFYYINDYKASPGVNTLGEAIVGCDCSDCFKGKCCPTEAGVLFAYNEHRQIKIPPGRPIYECNSRCKCGPDCPNRVVQKGPPYSLCIFRTDNGRGWGVKTLQKIKKNSFVMEYVGEVITSEEAERRGQQYDSRGITYLFDLDYEADEFTVDAARYGNVSHFVNHSCDPNLQVFNVFIDNLDVRLPRIALFSTRNIKAGEELTFDYQMKGSGDFSTDSIDMSPAKKRVRIACKCGAATCRGYLN.

Residues 43–101 (YEVEYLCDYRIEKGVEKFFVKWKGWPESCNTWEPTRNLKCPTLLKQFYSDLYNYFCALK) form the Chromo domain. The Pre-SET domain maps to 185-243 (VGCDCSDCFKGKCCPTEAGVLFAYNEHRQIKIPPGRPIYECNSRCKCGPDCPNRVVQKG). 9 residues coordinate Zn(2+): Cys-187, Cys-189, Cys-192, Cys-197, Cys-198, Cys-225, Cys-229, Cys-231, and Cys-235. An SET domain is found at 246-369 (YSLCIFRTDN…AGEELTFDYQ (124 aa)). S-adenosyl-L-methionine is bound by residues 257 to 259 (RGW), Tyr-300, and 326 to 327 (NH). Zn(2+) is bound by residues Cys-329, Cys-394, Cys-396, and Cys-401. A Post-SET domain is found at 390–406 (VRIACKCGAATCRGYLN).

The protein belongs to the class V-like SAM-binding methyltransferase superfamily. Histone-lysine methyltransferase family. Suvar3-9 subfamily.

It localises to the nucleus. The protein resides in the chromosome. The protein localises to the centromere. The enzyme catalyses L-lysyl(9)-[histone H3] + 3 S-adenosyl-L-methionine = N(6),N(6),N(6)-trimethyl-L-lysyl(9)-[histone H3] + 3 S-adenosyl-L-homocysteine + 3 H(+). In terms of biological role, histone methyltransferase that specifically trimethylates 'Lys-9' of histone H3 using monomethylated H3 'Lys-9' as substrate. H3 'Lys-9' trimethylation represents a specific tag for epigenetic transcriptional repression by recruiting HP1 (CBX1, CBX3 and/or CBX5) proteins to methylated histones. Mainly functions in heterochromatin regions, thereby playing a central role in the establishment of constitutive heterochromatin at pericentric and telomere regions. H3 'Lys-9' trimethylation is also required to direct DNA methylation at pericentric repeats. SUV39H1 is targeted to histone H3 via its interaction with RB1 and is involved in many processes. This Xenopus tropicalis (Western clawed frog) protein is Histone-lysine N-methyltransferase SUV39H2 (suv39h2).